The sequence spans 59 residues: Large ribosomal subunit protein bL32 (59 aa).

It belongs to the bacterial ribosomal protein bL32 family.

This Synechococcus sp. (strain RCC307) protein is Large ribosomal subunit protein bL32.